The chain runs to 345 residues: MKDDKEKALSAALAQIERQFGKGSIMKLGDNTTMDVETISTGSLGLDIALGAGGLPMGRVVEIYGPESSGKTTLTLEVIAEAQRNGKVCAFIDAEHALDPVYAEKLGVNIDELLISQPDTGEQALEIVDMLTRSGAIDVIVVDSVAALTPKAEIEGDMGDSHMGLQARMLSQAMRKLTGNLKKSNTMLIFINQIRMKIGVMFGSPETTTGGNALKFYASVRLDIRRIGAVKNGDEIVGNETRVKVVKNKIAPPFKQAEFQILYGEGINNLGELIELGVKHEFVEKAGAWYSCNGERIGQGKANAAKYLDEHPEMAKDVDTKLRDMFLSKTVVAEDKSEVKEKEKA.

65–72 (GPESSGKT) contributes to the ATP binding site.

The protein belongs to the RecA family.

The protein localises to the cytoplasm. In terms of biological role, can catalyze the hydrolysis of ATP in the presence of single-stranded DNA, the ATP-dependent uptake of single-stranded DNA by duplex DNA, and the ATP-dependent hybridization of homologous single-stranded DNAs. It interacts with LexA causing its activation and leading to its autocatalytic cleavage. The polypeptide is Protein RecA (Colwellia psychrerythraea (strain 34H / ATCC BAA-681) (Vibrio psychroerythus)).